Here is a 189-residue protein sequence, read N- to C-terminus: uncharacterized protein (189 aa).

To M.jannaschii MJ1461.

This is an uncharacterized protein from Methanocaldococcus jannaschii (strain ATCC 43067 / DSM 2661 / JAL-1 / JCM 10045 / NBRC 100440) (Methanococcus jannaschii).